Here is a 1214-residue protein sequence, read N- to C-terminus: ATP-dependent helicase/nuclease subunit A (1214 aa).

The UvrD-like helicase ATP-binding domain maps to 27 to 483 (HKRTAQQIEA…ILLKENFRSQ (457 aa)). An ATP-binding site is contributed by 48 to 55 (ASAGSGKT). In terms of domain architecture, UvrD-like helicase C-terminal spans 512–800 (QLVAGSEAQK…NLMTIHKSKG (289 aa)).

It belongs to the helicase family. AddA subfamily. Heterodimer of AddA and AddB/RexB. Mg(2+) serves as cofactor.

The catalysed reaction is Couples ATP hydrolysis with the unwinding of duplex DNA by translocating in the 3'-5' direction.. It carries out the reaction ATP + H2O = ADP + phosphate + H(+). Functionally, the heterodimer acts as both an ATP-dependent DNA helicase and an ATP-dependent, dual-direction single-stranded exonuclease. Recognizes the chi site generating a DNA molecule suitable for the initiation of homologous recombination. The AddA nuclease domain is required for chi fragment generation; this subunit has the helicase and 3' -&gt; 5' nuclease activities. The chain is ATP-dependent helicase/nuclease subunit A from Streptococcus equi subsp. zooepidemicus (strain MGCS10565).